Reading from the N-terminus, the 127-residue chain is Ribosome-binding factor A (127 aa).

The protein belongs to the RbfA family. Monomer. Binds 30S ribosomal subunits, but not 50S ribosomal subunits or 70S ribosomes.

The protein resides in the cytoplasm. Functionally, one of several proteins that assist in the late maturation steps of the functional core of the 30S ribosomal subunit. Associates with free 30S ribosomal subunits (but not with 30S subunits that are part of 70S ribosomes or polysomes). Required for efficient processing of 16S rRNA. May interact with the 5'-terminal helix region of 16S rRNA. This chain is Ribosome-binding factor A, found in Chloroflexus aggregans (strain MD-66 / DSM 9485).